The sequence spans 568 residues: Phosphoprotein (568 aa).

Residues 1–23 form a disordered region; sequence MDQDALISKEDSEVEREASGGRE. The segment covering 7–20 has biased composition (basic and acidic residues); that stretch reads ISKEDSEVEREASG. The tract at residues 33-41 is N0 binding; that stretch reads DAVLSSEPT. The interval 54-317 is disordered; that stretch reads INTLQRPGST…SPETDATKKG (264 aa). Basic and acidic residues-rich tracts occupy residues 99–110, 150–168, and 175–193; these read AEAHARNVDKQN, GAED…RGED, and EEIR…RADN. A phosphoserine; by host mark is found at serine 249, serine 257, and serine 260. The tract at residues 344–411 is multimerization; the sequence is FESSRDASYV…SFRDIYKRFS (68 aa). A coiled-coil region spans residues 364–429; sequence YAEMAFNVCG…LLMSNLSTLH (66 aa). Residues 412 to 445 form a l protein binding region; that stretch reads EYQKEQNSLLMSNLSTLHIITDRGGKTDNPDSPT. Residues 433–462 are disordered; sequence DRGGKTDNPDSPTRSPSVFAKTKENKTKAT. Phosphoserine; by host occurs at positions 447 and 449. Over residues 453–462 the composition is skewed to basic and acidic residues; sequence KTKENKTKAT. The interval 479–568 is interaction with the nucleocapsid (N-RNA); the sequence is DLLREDEFRE…VEEDIESLTN (90 aa).

Belongs to the respirovirus P protein family. In terms of assembly, homotetramer. Interacts (via multimerization domain) with polymerase L; this interaction forms the polymerase complex. Interacts (via N-terminus) with N0; this interaction allows P to chaperon N0 before encapsidation and form the N-P complex. Interacts (via C-terminus) with N-RNA template; this interaction positions the polymerase on the template. In terms of processing, phosphorylated by PKC/PRKCZ, and other unknown kinases. Phosphorylation is necessary for viral transcription and replication. The N-terminus contains the majority of phosphorylated sites. Ser-249 is the major site of phosphorylation, but is not necessary for most functions.

It is found in the host cytoplasm. Functionally, essential cofactor of the RNA polymerase L that plays a central role in the transcription and replication by forming the polymerase complex with RNA polymerase L and recruiting L to the genomic N-RNA template for RNA synthesis. Also plays a central role in the encapsidation of nascent RNA chains by forming the encapsidation complex with the nucleocapsid protein N (N-P complex). Acts as a chaperone for newly synthesized free N protein, so-called N0, allowing encapsidation of nascent RNA chains during replication. The nucleoprotein protein N prevents excessive phosphorylation of P, which leads to down-regulation of viral transcription/ replication. Participates, together with N, in the formation of viral factories (viroplasms), which are large inclusions in the host cytoplasm where replication takes place. Recruits host PI4KB and remodel the host endoplasmic reticulum membrane to form viral replication factories. The protein is Phosphoprotein (P/V/C) of Sendai virus (strain Ohita) (SeV).